Reading from the N-terminus, the 63-residue chain is Large ribosomal subunit protein uL29 (63 aa).

The protein belongs to the universal ribosomal protein uL29 family.

This is Large ribosomal subunit protein uL29 from Proteus mirabilis (strain HI4320).